The following is a 236-amino-acid chain: Phosphoribosylaminoimidazole-succinocarboxamide synthase (236 aa).

It belongs to the SAICAR synthetase family.

It catalyses the reaction 5-amino-1-(5-phospho-D-ribosyl)imidazole-4-carboxylate + L-aspartate + ATP = (2S)-2-[5-amino-1-(5-phospho-beta-D-ribosyl)imidazole-4-carboxamido]succinate + ADP + phosphate + 2 H(+). It functions in the pathway purine metabolism; IMP biosynthesis via de novo pathway; 5-amino-1-(5-phospho-D-ribosyl)imidazole-4-carboxamide from 5-amino-1-(5-phospho-D-ribosyl)imidazole-4-carboxylate: step 1/2. The polypeptide is Phosphoribosylaminoimidazole-succinocarboxamide synthase (Pseudomonas paraeruginosa (strain DSM 24068 / PA7) (Pseudomonas aeruginosa (strain PA7))).